We begin with the raw amino-acid sequence, 297 residues long: Lipoyl synthase (297 aa).

[4Fe-4S] cluster is bound by residues cysteine 34, cysteine 39, cysteine 45, cysteine 60, cysteine 64, cysteine 67, and serine 273. Positions 46-262 (WNKRHATVMI…KYVAYSKGFL (217 aa)) constitute a Radical SAM core domain.

It belongs to the radical SAM superfamily. Lipoyl synthase family. It depends on [4Fe-4S] cluster as a cofactor.

The protein localises to the cytoplasm. It carries out the reaction [[Fe-S] cluster scaffold protein carrying a second [4Fe-4S](2+) cluster] + N(6)-octanoyl-L-lysyl-[protein] + 2 oxidized [2Fe-2S]-[ferredoxin] + 2 S-adenosyl-L-methionine + 4 H(+) = [[Fe-S] cluster scaffold protein] + N(6)-[(R)-dihydrolipoyl]-L-lysyl-[protein] + 4 Fe(3+) + 2 hydrogen sulfide + 2 5'-deoxyadenosine + 2 L-methionine + 2 reduced [2Fe-2S]-[ferredoxin]. It participates in protein modification; protein lipoylation via endogenous pathway; protein N(6)-(lipoyl)lysine from octanoyl-[acyl-carrier-protein]: step 2/2. Functionally, catalyzes the radical-mediated insertion of two sulfur atoms into the C-6 and C-8 positions of the octanoyl moiety bound to the lipoyl domains of lipoate-dependent enzymes, thereby converting the octanoylated domains into lipoylated derivatives. The chain is Lipoyl synthase from Ehrlichia chaffeensis (strain ATCC CRL-10679 / Arkansas).